Here is a 173-residue protein sequence, read N- to C-terminus: Glycine cleavage system H protein, mitochondrial (173 aa).

Residues 1-48 (MALRAVRSVRAAVGGLRAISAPSAPCLPRPWGLRAGAVRELRTGPALL) constitute a mitochondrion transit peptide. One can recognise a Lipoyl-binding domain in the interval 66 to 148 (VGTVGISNFA…YEDGWLIKMT (83 aa)). The residue at position 107 (Lys-107) is an N6-lipoyllysine.

This sequence belongs to the GcvH family. Interacts with GLDC. The glycine cleavage system is composed of four proteins: P (GLDC), T (GCST), L (DLD) and H (GCSH). (R)-lipoate is required as a cofactor.

Its subcellular location is the mitochondrion. Its function is as follows. The glycine cleavage system catalyzes the degradation of glycine. The H protein (GCSH) shuttles the methylamine group of glycine from the P protein (GLDC) to the T protein (GCST). Has a pivotal role in the lipoylation of enzymes involved in cellular energetics such as the mitochondrial dihydrolipoyllysine-residue acetyltransferase component of pyruvate dehydrogenase complex (DLAT), and the mitochondrial dihydrolipoyllysine-residue succinyltransferase component of 2-oxoglutarate dehydrogenase complex (DLST). The polypeptide is Glycine cleavage system H protein, mitochondrial (Bos taurus (Bovine)).